A 555-amino-acid polypeptide reads, in one-letter code: Urocanate hydratase (555 aa).

NAD(+) contacts are provided by residues 52-53 (GG), Gln-130, 176-178 (GMG), Glu-196, Arg-201, 242-243 (NA), 263-267 (QTSAH), 273-274 (YL), and Tyr-322. Residue Cys-410 is part of the active site. Gly-492 contributes to the NAD(+) binding site.

The protein belongs to the urocanase family. Requires NAD(+) as cofactor.

The protein localises to the cytoplasm. It catalyses the reaction 4-imidazolone-5-propanoate = trans-urocanate + H2O. It participates in amino-acid degradation; L-histidine degradation into L-glutamate; N-formimidoyl-L-glutamate from L-histidine: step 2/3. Its function is as follows. Catalyzes the conversion of urocanate to 4-imidazolone-5-propionate. In Shewanella putrefaciens (strain CN-32 / ATCC BAA-453), this protein is Urocanate hydratase.